The primary structure comprises 56 residues: Large ribosomal subunit protein bL33 (56 aa).

Belongs to the bacterial ribosomal protein bL33 family.

The polypeptide is Large ribosomal subunit protein bL33 (Marinomonas sp. (strain MWYL1)).